The primary structure comprises 408 residues: Centromere protein U (408 aa).

Residues 1–33 are compositionally biased toward basic residues; that stretch reads DRPRPARLSHARFSKNHSGRTHSMKDKAGRKHR. A disordered region spans residues 1-218; that stretch reads DRPRPARLSH…GKRKKPRSYT (218 aa). Thr72 is modified (phosphothreonine; by PLK1). A Phosphothreonine modification is found at Thr92. Over residues 94 to 103 the composition is skewed to basic and acidic residues; it reads QEKEAKRSSD. Ser102 is subject to Phosphoserine. Position 104 is a phosphothreonine (Thr104). A phosphoserine mark is found at Ser105, Ser110, and Ser114. Over residues 118–127 the composition is skewed to basic residues; the sequence is SAKKPRRKLK. Phosphoserine occurs at positions 130, 133, and 135. Positions 176 to 186 are enriched in polar residues; that stretch reads PQKTGPQSAES. Lys178 is covalently cross-linked (Glycyl lysine isopeptide (Lys-Gly) (interchain with G-Cter in SUMO2)). Ser183 and Ser187 each carry phosphoserine. Thr192 bears the Phosphothreonine mark. Ser222 carries the post-translational modification Phosphoserine. The stretch at 273 to 350 forms a coiled coil; that stretch reads SNLKEELIKM…LRKAAYFLSN (78 aa). The Nuclear localization signal signature appears at 293-310; the sequence is KRKNAKIISNIEKKRQRL.

It belongs to the CENP-U/AME1 family. Component of the CENPA-NAC complex, at least composed of CENPA, CENPC, CENPH, CENPM, CENPN, CENPT and CENPU. The CENPA-NAC complex interacts with the CENPA-CAD complex, composed of CENPI, CENPK, CENPL, CENPO, CENPP, CENPQ, CENPR and CENPS. Interacts with MLF1. Phosphorylated by PLK1 at Thr-72, creating a self-tethering site that specifically interacts with the polo-box domain of PLK1.

It is found in the cytoplasm. The protein localises to the nucleus. The protein resides in the chromosome. Its subcellular location is the centromere. It localises to the kinetochore. Component of the CENPA-NAC (nucleosome-associated) complex, a complex that plays a central role in assembly of kinetochore proteins, mitotic progression and chromosome segregation. The CENPA-NAC complex recruits the CENPA-CAD (nucleosome distal) complex and may be involved in incorporation of newly synthesized CENPA into centromeres. Plays an important role in the correct PLK1 localization to the mitotic kinetochores. A scaffold protein responsible for the initial recruitment and maintenance of the kinetochore PLK1 population until its degradation. Involved in transcriptional repression. This chain is Centromere protein U (CENPU), found in Bos taurus (Bovine).